The chain runs to 417 residues: Serine hydroxymethyltransferase (417 aa).

Residues L121 and 125–127 (GHL) contribute to the (6S)-5,6,7,8-tetrahydrofolate site. K230 carries the post-translational modification N6-(pyridoxal phosphate)lysine. 355-357 (SPF) lines the (6S)-5,6,7,8-tetrahydrofolate pocket.

The protein belongs to the SHMT family. Homodimer. It depends on pyridoxal 5'-phosphate as a cofactor.

The protein localises to the cytoplasm. It carries out the reaction (6R)-5,10-methylene-5,6,7,8-tetrahydrofolate + glycine + H2O = (6S)-5,6,7,8-tetrahydrofolate + L-serine. It functions in the pathway one-carbon metabolism; tetrahydrofolate interconversion. The protein operates within amino-acid biosynthesis; glycine biosynthesis; glycine from L-serine: step 1/1. Functionally, catalyzes the reversible interconversion of serine and glycine with tetrahydrofolate (THF) serving as the one-carbon carrier. This reaction serves as the major source of one-carbon groups required for the biosynthesis of purines, thymidylate, methionine, and other important biomolecules. Also exhibits THF-independent aldolase activity toward beta-hydroxyamino acids, producing glycine and aldehydes, via a retro-aldol mechanism. In Legionella pneumophila (strain Corby), this protein is Serine hydroxymethyltransferase.